The sequence spans 152 residues: Superoxide dismutase [Cu-Zn] (152 aa).

Positions 45, 47, and 62 each coordinate Cu cation. C56 and C145 form a disulfide bridge. H62, H70, H79, and D82 together coordinate Zn(2+). H119 is a binding site for Cu cation.

The protein belongs to the Cu-Zn superoxide dismutase family. As to quaternary structure, homodimer. Cu cation serves as cofactor. The cofactor is Zn(2+).

Its subcellular location is the cytoplasm. The enzyme catalyses 2 superoxide + 2 H(+) = H2O2 + O2. Its function is as follows. Destroys radicals which are normally produced within the cells and which are toxic to biological systems. The chain is Superoxide dismutase [Cu-Zn] (SODCC) from Paulownia kawakamii (Dragon tree).